The sequence spans 1220 residues: DNA-directed RNA polymerase subunit beta' (1220 aa).

The Zn(2+) site is built by C60, C62, C75, and C78. The Mg(2+) site is built by D449, D451, and D453. Positions 818, 892, 899, and 902 each coordinate Zn(2+).

It belongs to the RNA polymerase beta' chain family. The RNAP catalytic core consists of 2 alpha, 1 beta, 1 beta' and 1 omega subunit. When a sigma factor is associated with the core the holoenzyme is formed, which can initiate transcription. Requires Mg(2+) as cofactor. Zn(2+) is required as a cofactor.

It catalyses the reaction RNA(n) + a ribonucleoside 5'-triphosphate = RNA(n+1) + diphosphate. DNA-dependent RNA polymerase catalyzes the transcription of DNA into RNA using the four ribonucleoside triphosphates as substrates. The protein is DNA-directed RNA polymerase subunit beta' of Lacticaseibacillus casei (strain BL23) (Lactobacillus casei).